The primary structure comprises 93 residues: Alpha-defensin 15 (93 aa).

Residues 1–19 (MKTLVLLSALVLLAFQVQA) form the signal peptide. A propeptide spanning residues 20 to 58 (DPIQNTDEETKTEEQPGEDDQAVSVSFGDPEGSSLQEES) is cleaved from the precursor. The tract at residues 23–56 (QNTDEETKTEEQPGEDDQAVSVSFGDPEGSSLQE) is disordered. 3 disulfides stabilise this stretch: Cys-64–Cys-92, Cys-66–Cys-81, and Cys-71–Cys-91.

This sequence belongs to the alpha-defensin family. As to expression, paneth cells of the small bowel.

Its subcellular location is the secreted. In terms of biological role, probably contributes to the antimicrobial barrier function of the small bowel mucosa. The protein is Alpha-defensin 15 (Defa15) of Mus musculus (Mouse).